We begin with the raw amino-acid sequence, 168 residues long: Endoribonuclease YbeY (168 aa).

The Zn(2+) site is built by histidine 127, histidine 131, and histidine 137.

It belongs to the endoribonuclease YbeY family. It depends on Zn(2+) as a cofactor.

It localises to the cytoplasm. In terms of biological role, single strand-specific metallo-endoribonuclease involved in late-stage 70S ribosome quality control and in maturation of the 3' terminus of the 16S rRNA. This chain is Endoribonuclease YbeY, found in Chromobacterium violaceum (strain ATCC 12472 / DSM 30191 / JCM 1249 / CCUG 213 / NBRC 12614 / NCIMB 9131 / NCTC 9757 / MK).